A 314-amino-acid chain; its full sequence is Homoserine kinase (314 aa).

ATP is bound at residue 96–106 (PIGSGLGSSAC).

The protein belongs to the GHMP kinase family. Homoserine kinase subfamily.

It is found in the cytoplasm. The catalysed reaction is L-homoserine + ATP = O-phospho-L-homoserine + ADP + H(+). Its pathway is amino-acid biosynthesis; L-threonine biosynthesis; L-threonine from L-aspartate: step 4/5. Catalyzes the ATP-dependent phosphorylation of L-homoserine to L-homoserine phosphate. The sequence is that of Homoserine kinase from Mannheimia succiniciproducens (strain KCTC 0769BP / MBEL55E).